A 431-amino-acid polypeptide reads, in one-letter code: Nuclear envelope integral membrane protein 1 (431 aa).

A signal peptide spans 1-29 (MAGEVEGEGCRVSWGVLVALLLLPLPSLC). Transmembrane regions (helical) follow at residues 151-171 (PRLFFVFLCGLLLFFYGDTLS), 175-195 (IFYYSTGITVGMLASMLILVF), 206-226 (PFVALLLGGWSVSIYVIQLVF), 236-256 (YWQYLLGYLGIVGFVSFAFCY), and 266-286 (SINILNWTLQLIGLLLMYISV). Residues 176-287 (FYYSTGITVG…GLLLMYISVQ (112 aa)) form an a; required for its colocalization with lamins at the nuclear envelope region. The short motif at 317-325 (RKIKLKRGK) is the Nuclear localization signal element. Residues 326-395 (PSPPRLLTEE…LTPNEVSVHE (70 aa)) are b; required for interaction with ran. The tract at residues 326–431 (PSPPRLLTEE…IEPVLYQDLR (106 aa)) is interaction with banf1-a and banf1-b. Residues 368 to 375 (SRIQSPKR) form a BAF-binding site (BBS); essential for interaction with banf1-a, banf1-b and ran region.

This sequence belongs to the NEMP family. Homooligomer. Interacts with banf1-a and banf1-b. Interacts with ran-gtp. Phosphorylated.

Its subcellular location is the nucleus inner membrane. It localises to the nucleus envelope. In terms of biological role, in concert with ran, required for proper eye development. May be involved in the expression of early eye marker genes. Contributes to nuclear envelope stiffness in germ cells. Required for fertility. Essential for normal erythropoiesis. Required for efficient nuclear envelope opening and enucleation during the late stages of erythroblast maturation. This chain is Nuclear envelope integral membrane protein 1 (nemp1), found in Xenopus tropicalis (Western clawed frog).